Here is an 855-residue protein sequence, read N- to C-terminus: Replication factor C small subunit (855 aa).

One can recognise a DOD-type homing endonuclease domain in the interval 185-308; sequence WLGYFLGGGY…IAYALAGFGI (124 aa).

This sequence belongs to the activator 1 small subunits family. RfcS subfamily. In terms of assembly, heteromultimer composed of small subunits (RfcS) and large subunits (RfcL). This protein undergoes a protein self splicing that involves a post-translational excision of the intervening region (intein) followed by peptide ligation.

Its function is as follows. Part of the RFC clamp loader complex which loads the PCNA sliding clamp onto DNA. The chain is Replication factor C small subunit (rfcS) from Pyrococcus horikoshii (strain ATCC 700860 / DSM 12428 / JCM 9974 / NBRC 100139 / OT-3).